Consider the following 408-residue polypeptide: Argininosuccinate synthase (408 aa).

Residues 10 to 18 (AYSGGLDTS) and alanine 37 each bind ATP. Positions 90 and 95 each coordinate L-citrulline. Glycine 120 provides a ligand contact to ATP. The L-aspartate site is built by threonine 122, asparagine 126, and aspartate 127. Asparagine 126 provides a ligand contact to L-citrulline. L-citrulline-binding residues include arginine 130, serine 181, serine 190, glutamate 266, and tyrosine 278.

It belongs to the argininosuccinate synthase family. Type 1 subfamily. As to quaternary structure, homotetramer.

The protein resides in the cytoplasm. It catalyses the reaction L-citrulline + L-aspartate + ATP = 2-(N(omega)-L-arginino)succinate + AMP + diphosphate + H(+). The protein operates within amino-acid biosynthesis; L-arginine biosynthesis; L-arginine from L-ornithine and carbamoyl phosphate: step 2/3. The polypeptide is Argininosuccinate synthase (Cereibacter sphaeroides (strain ATCC 17025 / ATH 2.4.3) (Rhodobacter sphaeroides)).